The chain runs to 257 residues: 5'-nucleotidase SurE (257 aa).

4 residues coordinate a divalent metal cation: D9, D10, S40, and N93.

The protein belongs to the SurE nucleotidase family. A divalent metal cation serves as cofactor.

The protein localises to the cytoplasm. The enzyme catalyses a ribonucleoside 5'-phosphate + H2O = a ribonucleoside + phosphate. Functionally, nucleotidase that shows phosphatase activity on nucleoside 5'-monophosphates. The polypeptide is 5'-nucleotidase SurE (Campylobacter hominis (strain ATCC BAA-381 / DSM 21671 / CCUG 45161 / LMG 19568 / NCTC 13146 / CH001A)).